The sequence spans 699 residues: MARKTPLNRYRNIGICAHVDAGKTTTTERILFYTGVSHKIGEVHDGAATMDWMEQEQERGITITSAATTTFWQGMDQQYDQHRINIIDTPGHVDFTIEVERSLRVLDGAVVVFCGSSGVEPQSETVWRQANKYEVPRIVFVNKMDRAGADFDSVCNQIRKRLGASVVPIQYNIGAEDNFKGVVDLIRMKAIFWNEEDMGMTYEEKDIPDDIKDRCDELREQMTEAAAEGSEELMEKYLEEGDLSNDEIKAGLRQQVLANEIVLGLCGSAFKNKGVQALLDAVIEFLPAPDEVKAIQGVLPDGETVEARKSSDDEPFSALAFKIATDPFVGSLTFIRVYSGVLNSGDSVLNSVREKKERVGRLLQMHANSREEIKEVLAGDIAACVGMKDVTTGDTLCDLKNPIVLERMEFPEPVISVAVEPKSKADQEKMGLALGRLAQEDPSFRVKTDEETGQTIISGMGELHLDILVDRMRREFKVEANIGAPQVAYRETFTRGADVDGKFVKQSGGRGQYGHVKVKFEPIDRDEEFQFEEQIHGGSVPKEYFGAVQKGIDEQLQAGVLAGYPILGVKATLYDGSYHEVDSNENAFRMAGALAVKNAAKEAGAVLLEPIMKVEAVTPEDYMGDVMGDLNRRRGIVQGMEDTMAGKIIRAEVPLSEMFGYATDLRSMSQGRASYSMEFLKYAEAPKNIADEVISGKKS.

A tr-type G domain is found at 8–290 (NRYRNIGICA…AVIEFLPAPD (283 aa)). GTP contacts are provided by residues 17–24 (AHVDAGKT), 88–92 (DTPGH), and 142–145 (NKMD).

It belongs to the TRAFAC class translation factor GTPase superfamily. Classic translation factor GTPase family. EF-G/EF-2 subfamily.

The protein localises to the cytoplasm. Functionally, catalyzes the GTP-dependent ribosomal translocation step during translation elongation. During this step, the ribosome changes from the pre-translocational (PRE) to the post-translocational (POST) state as the newly formed A-site-bound peptidyl-tRNA and P-site-bound deacylated tRNA move to the P and E sites, respectively. Catalyzes the coordinated movement of the two tRNA molecules, the mRNA and conformational changes in the ribosome. The sequence is that of Elongation factor G from Alcanivorax borkumensis (strain ATCC 700651 / DSM 11573 / NCIMB 13689 / SK2).